We begin with the raw amino-acid sequence, 100 residues long: MTLTKAELADILVDKVSNVTKNDAKEIVELFFEEIRSTLASGEEIKISGFGNFQLRDKPQRPGRNPKTGEEVPITARRVVTFHASQKLKSMVEHYYDKQR.

Positions 53–72 are disordered; it reads FQLRDKPQRPGRNPKTGEEV.

It belongs to the bacterial histone-like protein family. As to quaternary structure, heterodimer of an alpha and a beta chain.

Its function is as follows. This protein is one of the two subunits of integration host factor, a specific DNA-binding protein that functions in genetic recombination as well as in transcriptional and translational control. This is Integration host factor subunit alpha from Neisseria meningitidis serogroup C (strain 053442).